The primary structure comprises 357 residues: MEKGMNVLHDFGIQSTHYLQVNYQNSQDWFILVSVIADLRNAFYVLFPIWFHLREAVGIKLLWVAVIGDWLNLVFKWILFGQRPYWWVLDTDYYSNTSAPLIKQFPVTCETGPGSPSGHAMGTAGVYYVMVTSTLSIFRGKKKPTYRFRCLNVMLWLGFWVVQLNVCLSRIYLAAHFPHQVVAGVLSGIAVAETFRHIQSIYNASLKKYFLITCFLFSFAIGFYLLLKWLGVDLLWTLEKAKRRCERPEWVHIDTTPFASLLKNLGTLFGLGLALNSSMYRESCKGKLSKWFPFRLSCIVASLVLLHLFDSLKPPSQIELIFYVLSFCKSAAVPLASVSLIPYCLAWVLGQPNKKTV.

Topologically, residues 1 to 28 are lumenal; that stretch reads MEKGMNVLHDFGIQSTHYLQVNYQNSQD. The helical transmembrane segment at 29–49 threads the bilayer; sequence WFILVSVIADLRNAFYVLFPI. Over 50–60 the chain is Cytoplasmic; sequence WFHLREAVGIK. The helical transmembrane segment at 61–81 threads the bilayer; it reads LLWVAVIGDWLNLVFKWILFG. The Lumenal portion of the chain corresponds to 82–117; that stretch reads QRPYWWVLDTDYYSNTSAPLIKQFPVTCETGPGSPS. Substrate is bound at residue Arg83. N-linked (GlcNAc...) asparagine glycosylation is present at Asn96. A helical transmembrane segment spans residues 118 to 138; the sequence is GHAMGTAGVYYVMVTSTLSIF. The Proton donor role is filled by His119. The Cytoplasmic portion of the chain corresponds to 139-147; sequence RGKKKPTYR. A helical transmembrane segment spans residues 148–168; sequence FRCLNVMLWLGFWVVQLNVCL. Over 169 to 170 the chain is Lumenal; the sequence is SR. Position 170 (Arg170) interacts with substrate. A helical transmembrane segment spans residues 171–191; sequence IYLAAHFPHQVVAGVLSGIAV. His176 acts as the Nucleophile in catalysis. The Cytoplasmic portion of the chain corresponds to 192-209; that stretch reads AETFRHIQSIYNASLKKY. The helical transmembrane segment at 210-230 threads the bilayer; the sequence is FLITCFLFSFAIGFYLLLKWL. The Lumenal portion of the chain corresponds to 231–254; the sequence is GVDLLWTLEKAKRRCERPEWVHID. The chain crosses the membrane as a helical span at residues 255-275; the sequence is TTPFASLLKNLGTLFGLGLAL. Residues 276-291 are Cytoplasmic-facing; the sequence is NSSMYRESCKGKLSKW. Residues 292 to 312 traverse the membrane as a helical segment; the sequence is FPFRLSCIVASLVLLHLFDSL. At 313 to 320 the chain is on the lumenal side; sequence KPPSQIEL. A helical membrane pass occupies residues 321–341; it reads IFYVLSFCKSAAVPLASVSLI. Over 342–357 the chain is Cytoplasmic; sequence PYCLAWVLGQPNKKTV. The Prevents secretion from ER signature appears at 354–357; the sequence is KKTV.

This sequence belongs to the glucose-6-phosphatase family.

It localises to the endoplasmic reticulum membrane. It carries out the reaction D-glucose 6-phosphate + H2O = D-glucose + phosphate. It functions in the pathway carbohydrate biosynthesis; gluconeogenesis. In terms of biological role, hydrolyzes glucose-6-phosphate to glucose in the endoplasmic reticulum. Forms with the glucose-6-phosphate transporter (SLC37A4/G6PT) the complex responsible for glucose production in the terminal step of glycogenolysis and gluconeogenesis. Hence, it is the key enzyme in homeostatic regulation of blood glucose levels. This Bos taurus (Bovine) protein is Glucose-6-phosphatase catalytic subunit 1 (G6PC1).